The sequence spans 202 residues: Matrix protein (202 aa).

The short motif at 35-38 is the PPXY motif element; it reads PPEY. The segment at 115–151 is essential for glycoprotein binding; the sequence is KLRRTLIFQWADSRGPLEGEELEYSQEITWDDNTEFV.

Belongs to the lyssavirus matrix protein family. In terms of assembly, homomultimer. Interacts with nucleoprotein and with the cytoplasmic domain of glycoprotein. Interacts with host ATP6V1A; this interaction plays an important role in virion uncoating after viral entry.

The protein localises to the virion membrane. It localises to the host endomembrane system. The protein resides in the host cytoplasm. In terms of biological role, plays a major role in assembly, budding and uncoating of virion after membrane fusion. Completely covers the ribonucleoprotein coil and keep it in condensed bullet-shaped form. Inhibits viral transcription and stimulates replication. Plays a major role in early induction of TRAIL-mediated apoptosis in infected neurons. Inhibits the integrated stress response (ISR) in the infected cell by blocking the formation of stress granules. The sequence is that of Matrix protein (M) from Homo sapiens (Human).